The sequence spans 155 residues: D-aminoacyl-tRNA deacylase (155 aa).

The short motif at 137-138 (GP) is the Gly-cisPro motif, important for rejection of L-amino acids element.

The protein belongs to the DTD family. In terms of assembly, homodimer.

It is found in the cytoplasm. It carries out the reaction glycyl-tRNA(Ala) + H2O = tRNA(Ala) + glycine + H(+). It catalyses the reaction a D-aminoacyl-tRNA + H2O = a tRNA + a D-alpha-amino acid + H(+). Its function is as follows. An aminoacyl-tRNA editing enzyme that deacylates mischarged D-aminoacyl-tRNAs. Also deacylates mischarged glycyl-tRNA(Ala), protecting cells against glycine mischarging by AlaRS. Acts via tRNA-based rather than protein-based catalysis; rejects L-amino acids rather than detecting D-amino acids in the active site. By recycling D-aminoacyl-tRNA to D-amino acids and free tRNA molecules, this enzyme counteracts the toxicity associated with the formation of D-aminoacyl-tRNA entities in vivo and helps enforce protein L-homochirality. The protein is D-aminoacyl-tRNA deacylase of Roseiflexus sp. (strain RS-1).